Here is a 434-residue protein sequence, read N- to C-terminus: MESILSLLRGMGIMHLELGQALMMLISLVLLWLAIARKFEPLLLLPIGFGGLLSNIPEAGLAMSALESLLHQGSAEQIAIIAAKLNTVADPVAIKEALANAVPSVQNQLEVMAGDMGYNAGVLALFYKVAIGYGVAPLIIFMGVGAMTDFGPLLANPRTLLLGAAAQFGIFATIIGALLLNWTGIISFTLPQAAAIGIIGGADGPTAIYLSSKLAPELLGAIAVAAYSYMALVPLIQPPIMRALTTQAERKIKMVQLRNVSNREKILFPIVLVTLVALLLPDAAPLLGMFCFGNLLRTSGVVERLNDTAQNALINIVTIFLGLAVGSKLVADKFLQPQTLGILLLGVVAFCIGTASGVIMAKFMNKICKHPINPLIGAAGVSAVPMAARVANKVGLEEDHQNFLLMHAMGPNVAGVIGSAIAAGVMLKYVSALM.

Helical transmembrane passes span 13–35, 122–144, 159–181, 186–208, 223–245, 266–288, 308–327, 339–361, and 403–425; these read IMHL…WLAI, VLAL…FMGV, TLLL…LLLN, ISFT…PTAI, AVAA…RALT, ILFP…PLLG, TAQN…AVGS, TLGI…VIMA, and FLLM…AAGV.

The protein belongs to the GcdB/MmdB/OadB family. Heterotrimer of an alpha, a beta and a gamma subunit. The cofactor is Na(+).

It localises to the cell membrane. It carries out the reaction oxaloacetate + 2 Na(+)(in) + H(+) = pyruvate + 2 Na(+)(out) + CO2. In terms of biological role, catalyzes the decarboxylation of oxaloacetate coupled to Na(+) translocation. This Pasteurella multocida (strain Pm70) protein is Probable oxaloacetate decarboxylase beta chain (oadB).